Reading from the N-terminus, the 240-residue chain is Transcriptional regulatory protein BaeR (240 aa).

Residues 12–125 (RILIVEDEPK…EVVARVKTIL (114 aa)) form the Response regulatory domain. Asp-61 bears the 4-aspartylphosphate mark. The ompR/PhoB-type DNA-binding region spans 131–234 (QRELQQQDAE…VYGVGYRWEA (104 aa)).

Post-translationally, phosphorylated by BaeS.

The protein resides in the cytoplasm. Its function is as follows. Member of the two-component regulatory system BaeS/BaeR. Activates the mdtABCD operon. This chain is Transcriptional regulatory protein BaeR (baeR), found in Escherichia coli O6:H1 (strain CFT073 / ATCC 700928 / UPEC).